A 395-amino-acid chain; its full sequence is Dihydroorotate dehydrogenase (quinone), mitochondrial (395 aa).

Residues 1–10 (MAWRQLRKRA) constitute a mitochondrion; not cleaved transit peptide. Residues 1–10 (MAWRQLRKRA) lie on the Mitochondrial matrix side of the membrane. A helical membrane pass occupies residues 11–30 (LDAAIILGGGGLLFTSYLTA). Topologically, residues 31–395 (TGDDHFYAEY…TDAIGVDHRR (365 aa)) are mitochondrial intermembrane. FMN contacts are provided by residues 95–99 (AGFDK) and serine 119. Lysine 99 is a binding site for substrate. 144 to 148 (NRYGF) contributes to the substrate binding site. Residues asparagine 180 and asparagine 211 each contribute to the FMN site. Substrate is bound at residue 211–216 (NVSSPN). The Nucleophile role is filled by serine 214. FMN-binding residues include lysine 254 and threonine 282. 283 to 284 (NT) lines the substrate pocket. FMN-binding positions include glycine 305, glycine 334, and 355–356 (YT).

It belongs to the dihydroorotate dehydrogenase family. Type 2 subfamily. Monomer. The cofactor is FMN. The uncleaved transit peptide is required for mitochondrial targeting and proper membrane integration.

The protein resides in the mitochondrion inner membrane. The catalysed reaction is (S)-dihydroorotate + a quinone = orotate + a quinol. The protein operates within pyrimidine metabolism; UMP biosynthesis via de novo pathway; orotate from (S)-dihydroorotate (quinone route): step 1/1. In terms of biological role, catalyzes the conversion of dihydroorotate to orotate with quinone as electron acceptor. Required for UMP biosynthesis via de novo pathway. The chain is Dihydroorotate dehydrogenase (quinone), mitochondrial (Dhodh) from Mus musculus (Mouse).